A 207-amino-acid chain; its full sequence is Suppressor of IKBKE 1 (207 aa).

Coiled-coil stretches lie at residues 70 to 102 (HILL…DALE) and 162 to 193 (QFCK…SLQA).

This sequence belongs to the SIKE family. In terms of assembly, interacts with IKBKE and TBK1 via its coiled coil region. Interaction with TBK1 is disrupted upon viral infection or TLR3 stimulation. Interacts with CDC42BPB. Interacts with SIKE1 which mediates association with the STRIPAK core complex composed of PP2A catalytic and scaffolding subunits, the striatins (PP2A regulatory subunits), the striatin-associated proteins MOB4, STRIP1 and STRIP2, PDCD10 and members of the STE20 kinases, such as STK24 and STK26. As to expression, widely expressed. Expressed in brain, heart, skeletal muscle, colon, thymus, spleen, kidney, liver, small intestine, placenta, lung and leukocytes. Present in all cell lines tested (at protein level).

The protein localises to the cytoplasm. Physiological suppressor of IKK-epsilon and TBK1 that plays an inhibitory role in virus- and TLR3-triggered IRF3. Inhibits TLR3-mediated activation of interferon-stimulated response elements (ISRE) and the IFN-beta promoter. May act by disrupting the interactions of IKBKE or TBK1 with TICAM1/TRIF, IRF3 and RIGI. Does not inhibit NF-kappa-B activation pathways. Associates with the striatin-interacting phosphatase and kinase (STRIPAK) core complex, forming the extended (SIKE1:SLMAP)STRIPAK complex. The (SIKE1:SLMAP)STRIPAK complex dephosphorylates STK3 leading to the inhibition of Hippo signaling and the control of cell growth. The sequence is that of Suppressor of IKBKE 1 from Homo sapiens (Human).